Reading from the N-terminus, the 334-residue chain is Aspartate carbamoyltransferase catalytic subunit (334 aa).

The carbamoyl phosphate site is built by arginine 70 and threonine 71. Lysine 98 is an L-aspartate binding site. Carbamoyl phosphate contacts are provided by arginine 120, histidine 150, and glutamine 153. Arginine 183 and arginine 239 together coordinate L-aspartate. Carbamoyl phosphate contacts are provided by glycine 280 and proline 281.

This sequence belongs to the aspartate/ornithine carbamoyltransferase superfamily. ATCase family. In terms of assembly, heterododecamer (2C3:3R2) of six catalytic PyrB chains organized as two trimers (C3), and six regulatory PyrI chains organized as three dimers (R2).

The catalysed reaction is carbamoyl phosphate + L-aspartate = N-carbamoyl-L-aspartate + phosphate + H(+). The protein operates within pyrimidine metabolism; UMP biosynthesis via de novo pathway; (S)-dihydroorotate from bicarbonate: step 2/3. Functionally, catalyzes the condensation of carbamoyl phosphate and aspartate to form carbamoyl aspartate and inorganic phosphate, the committed step in the de novo pyrimidine nucleotide biosynthesis pathway. This Pseudomonas aeruginosa (strain LESB58) protein is Aspartate carbamoyltransferase catalytic subunit.